Here is a 144-residue protein sequence, read N- to C-terminus: EF-hand calcium-binding domain-containing protein 8 (144 aa).

EF-hand domains follow at residues 52-86 and 87-122; these read IHLA…VLSS and VSDE…EFQG.

The polypeptide is EF-hand calcium-binding domain-containing protein 8 (EFCAB8) (Homo sapiens (Human)).